The chain runs to 279 residues: Protein NipSnap homolog 1 (279 aa).

It belongs to the NipSnap family.

It localises to the mitochondrion matrix. Protein involved in mitophagy. Accumulates on the mitochondria surface in response to mitochondrial depolarization and acts as a 'eat me' signal by recruiting proteins involved in selective autophagy. This Danio rerio (Zebrafish) protein is Protein NipSnap homolog 1.